The chain runs to 296 residues: NAD kinase (296 aa).

The active-site Proton acceptor is the Asp-72. NAD(+) contacts are provided by residues 72-73, 146-147, Arg-157, Lys-174, Asp-176, 187-192, and Gln-247; these read DG, ND, and TAYALS.

It belongs to the NAD kinase family. A divalent metal cation serves as cofactor.

Its subcellular location is the cytoplasm. The enzyme catalyses NAD(+) + ATP = ADP + NADP(+) + H(+). Functionally, involved in the regulation of the intracellular balance of NAD and NADP, and is a key enzyme in the biosynthesis of NADP. Catalyzes specifically the phosphorylation on 2'-hydroxyl of the adenosine moiety of NAD to yield NADP. The chain is NAD kinase from Pseudomonas entomophila (strain L48).